Here is a 346-residue protein sequence, read N- to C-terminus: MAKRKLTQNQTRRIQSNNAKTLHRHKKKDIEWSDEMLGESQEGVVVTRYSIHADVENEQGEIYRCNLRRTLSSLVVGDKVVWRKGNEQLQGVSGVIEAIHPRENEISRPDYYDGLKPIAANIDRIIIVSAVLPTLSLNIIDRYLVVCEIAGITPLIVLNKVDLLAQEQRQEIEDQLKIYQDIGYEILMISAKSGENMEKLTALLAQGTAIFVGQSGVGKSSLINHILPSVNAQVGDVSETSGLGQHTTTSSRLYHLPQGGNLIDSPGIREFGLWHLDAEQITKGYREFQYVLGTCKFRDCKHLSDPGCALREAVEQGKISPVRYDSYHRLIESLSETKSQRHFSLV.

A disordered region spans residues 1–26; that stretch reads MAKRKLTQNQTRRIQSNNAKTLHRHK. Residues 7 to 20 are compositionally biased toward polar residues; it reads TQNQTRRIQSNNAK. Residues 103–271 enclose the CP-type G domain; the sequence is ENEISRPDYY…LIDSPGIREF (169 aa). GTP-binding positions include 159-162 and 213-221; these read NKVD and GQSGVGKSS. Residues C295, C300, H302, and C308 each coordinate Zn(2+).

The protein belongs to the TRAFAC class YlqF/YawG GTPase family. RsgA subfamily. As to quaternary structure, monomer. Associates with 30S ribosomal subunit, binds 16S rRNA. Requires Zn(2+) as cofactor.

It is found in the cytoplasm. Functionally, one of several proteins that assist in the late maturation steps of the functional core of the 30S ribosomal subunit. Helps release RbfA from mature subunits. May play a role in the assembly of ribosomal proteins into the subunit. Circularly permuted GTPase that catalyzes slow GTP hydrolysis, GTPase activity is stimulated by the 30S ribosomal subunit. This Haemophilus influenzae (strain 86-028NP) protein is Small ribosomal subunit biogenesis GTPase RsgA.